Consider the following 200-residue polypeptide: Transcriptional repressor NrdR (200 aa).

Residues 3-34 (CPRCGKQEIRVLESRSAEGGQSVRRRRECMSC) fold into a zinc finger. The 91-residue stretch at 49-139 (IMVIKRDGSR…VYRKFQGIKD (91 aa)) folds into the ATP-cone domain. Positions 158 to 200 (LERPLRNSPPSESESTASPDWVGGIPQLLDQNDTSSNLSEIPK) are disordered. Residues 186–200 (LDQNDTSSNLSEIPK) are compositionally biased toward polar residues.

Belongs to the NrdR family. Zn(2+) serves as cofactor.

Functionally, negatively regulates transcription of bacterial ribonucleotide reductase nrd genes and operons by binding to NrdR-boxes. This chain is Transcriptional repressor NrdR, found in Synechococcus sp. (strain JA-3-3Ab) (Cyanobacteria bacterium Yellowstone A-Prime).